We begin with the raw amino-acid sequence, 902 residues long: Histone-lysine N-methyltransferase CLF (902 aa).

The segment covering 1–14 (MASEASPSSSATRS) has biased composition (low complexity). 3 disordered regions span residues 1–33 (MASE…KEVS), 73–107 (SMER…SNNN), and 335–522 (GKTG…FMGE). 2 stretches are compositionally biased toward basic and acidic residues: residues 15 to 33 (EPPK…KEVS) and 78 to 95 (GSCK…RDSP). Positions 337 to 357 (TGTSSDGAGTKTTPTKFSSKL) are enriched in polar residues. Low complexity predominate over residues 394–403 (DKVSSSPKVK). Over residues 404-416 (GSGRRVGRKRNKN) the composition is skewed to basic residues. Residues 438 to 449 (SDSIASGSCSPS) are compositionally biased toward low complexity. The segment covering 459–473 (ATSSSQKHVKSGNSG) has biased composition (polar residues). Residues 531–581 (TNKLWRPLEKSLFDKGVEIFGMNSCLIARNLLSGFKSCWEVFQYMTCSENK) enclose the SANT domain. A CXC domain is found at 638–737 (RKRITEKKDQ…SLGVPSQRGD (100 aa)). In terms of domain architecture, SET spans 752-867 (QRVLLGISDV…AGEELFYDYR (116 aa)). An S-adenosyl-L-methionine-binding site is contributed by Y866. A compositionally biased stretch (basic and acidic residues) spans 875 to 890 (AWAKKPEAPGSKKDEN). A disordered region spans residues 875 to 902 (AWAKKPEAPGSKKDENVTPSVGRPKKLA).

Belongs to the class V-like SAM-binding methyltransferase superfamily. Histone-lysine methyltransferase family. EZ subfamily. In terms of assembly, probable component of a PcG complex. In plants, PcG complexes are probably composed of a member of the EZ family (CLF or MEA), FIE, and a member of the VEFS family (FIS2, VRN2 or EMF2). Interacts with FIE. Interacts with RING1A. Binds to ALP1. Interacts with BLI. Binds to ATX1 in the nucleus. Interacts with EOL1. Interacts (via SANT domain) with HXK1 in the nucleus. Strongly expressed throughout the apical meristem, leaf primordia, and leaves of 7-8 day-old seedling. Weakly expressed in the vasculature of hypocotyl. Strongly expressed throughout the young stages 1 and 2 floral meristems that arose on the flanks of the apex. In stage 3 and 4 flowers, it is expressed in the emerging sepal primordia and in the dome of the floral meristem. During stages 6 and 7, it is strongly expressed in developing petal and stamen, and weakly expressed in the sepals. Late in floral development, at stage 12, it is weakly expressed in all floral whorls, and expressed at intermediate level in petals and ovules.

It localises to the nucleus. The catalysed reaction is L-lysyl-[histone] + S-adenosyl-L-methionine = N(6)-methyl-L-lysyl-[histone] + S-adenosyl-L-homocysteine + H(+). In terms of biological role, polycomb group (PcG) protein. Catalytic subunit of some PcG multiprotein complex, which methylates 'Lys-27' of histone H3, leading to transcriptional repression of the affected target genes, mainly abscisic acid (ABA) responsive elements. Required to regulate floral development by repressing the AGAMOUS homeotic gene in leaves, inflorescence stems and flowers. Together with ATX1, modulates AG nucleosome methylation statement. Regulates the antero-posterior organization of the endosperm, as well as the division and elongation rates of leaf cells. PcG proteins act by forming multiprotein complexes, which are required to maintain the transcriptionally repressive state of homeotic genes throughout development. PcG proteins are not required to initiate repression, but to maintain it during later stages of development. Forms a nuclear complex with EZA1/SWN and HXK1 to target common glucose-responsive genes and regulate glucose signaling by glucose-mediated gene repression. Affects the recruitment of HXK1 to the target chromatin. The polypeptide is Histone-lysine N-methyltransferase CLF (Arabidopsis thaliana (Mouse-ear cress)).